A 490-amino-acid chain; its full sequence is Glutamyl-tRNA(Gln) amidotransferase subunit A (490 aa).

Active-site charge relay system residues include Lys-76 and Ser-151. Catalysis depends on Ser-175, which acts as the Acyl-ester intermediate.

Belongs to the amidase family. GatA subfamily. Heterotrimer of A, B and C subunits.

It catalyses the reaction L-glutamyl-tRNA(Gln) + L-glutamine + ATP + H2O = L-glutaminyl-tRNA(Gln) + L-glutamate + ADP + phosphate + H(+). Its function is as follows. Allows the formation of correctly charged Gln-tRNA(Gln) through the transamidation of misacylated Glu-tRNA(Gln) in organisms which lack glutaminyl-tRNA synthetase. The reaction takes place in the presence of glutamine and ATP through an activated gamma-phospho-Glu-tRNA(Gln). This is Glutamyl-tRNA(Gln) amidotransferase subunit A from Aromatoleum aromaticum (strain DSM 19018 / LMG 30748 / EbN1) (Azoarcus sp. (strain EbN1)).